Reading from the N-terminus, the 469-residue chain is Diaminobutyrate--2-oxoglutarate transaminase (469 aa).

Residue Lys-290 is modified to N6-(pyridoxal phosphate)lysine.

It belongs to the class-III pyridoxal-phosphate-dependent aminotransferase family. Pyridoxal 5'-phosphate is required as a cofactor.

The protein resides in the cytoplasm. It catalyses the reaction L-2,4-diaminobutanoate + 2-oxoglutarate = L-aspartate 4-semialdehyde + L-glutamate. In terms of biological role, involved in the degradation of ectoine, which allows H.elongata to utilize ectoine as both a carbon and a nitrogen source for growth. Probably catalyzes the conversion of L-2,4-diaminobutyrate (DABA) to L-aspartate beta-semialdehyde (ASA) by transamination with 2-oxoglutarate. The chain is Diaminobutyrate--2-oxoglutarate transaminase from Halomonas elongata (strain ATCC 33173 / DSM 2581 / NBRC 15536 / NCIMB 2198 / 1H9).